The sequence spans 338 residues: Pseudouridylate synthase TRUB1 (338 aa).

A2 is subject to N-acetylalanine. D109 (nucleophile) is an active-site residue.

This sequence belongs to the pseudouridine synthase TruB family.

The protein localises to the nucleus. The protein resides in the cytoplasm. Its subcellular location is the cytosol. The enzyme catalyses a uridine in mRNA = a pseudouridine in mRNA. It catalyses the reaction a uridine in tRNA = a pseudouridine in tRNA. The catalysed reaction is uridine(55) in tRNA = pseudouridine(55) in tRNA. Functionally, pseudouridine synthase that catalyzes pseudouridylation of mRNAs and tRNAs. Mediates pseudouridylation of mRNAs with the consensus sequence 5'-GUUCNANNC-3', harboring a stem-loop structure. Constitutes the major pseudouridine synthase acting on mRNAs. Also catalyzes pseudouridylation of some tRNAs, including synthesis of pseudouridine(55) from uracil-55, in the psi GC loop of a subset of tRNAs. Promotes the processing of pri-let-7 microRNAs (pri-miRNAs) independently of its RNA pseudouridylate synthase activity. Acts by binding to the stem-loop structure on pri-let-7, preventing LIN28-binding (LIN28A and/or LIN28B), thereby enhancing the interaction between pri-let-7 and the microprocessor DGCR8, which mediates miRNA maturation. In Mus musculus (Mouse), this protein is Pseudouridylate synthase TRUB1.